Consider the following 131-residue polypeptide: MKMKIITPDGYVWDREIEEVILPSSTGQLGILAHHAPLLTALDIGVMRAKTAQGWVALVLFGGFAEVLNNQITILVNGAQEAHEIDLQHAQQEEAKALEQLQQAATPTAQIEARQNLAKWRARVQAVSFQI.

Belongs to the ATPase epsilon chain family. In terms of assembly, F-type ATPases have 2 components, CF(1) - the catalytic core - and CF(0) - the membrane proton channel. CF(1) has five subunits: alpha(3), beta(3), gamma(1), delta(1), epsilon(1). CF(0) has three main subunits: a, b and c.

The protein resides in the plastid. The protein localises to the chloroplast thylakoid membrane. In terms of biological role, produces ATP from ADP in the presence of a proton gradient across the membrane. This is ATP synthase epsilon chain, chloroplastic from Cyanidioschyzon merolae (strain NIES-3377 / 10D) (Unicellular red alga).